A 424-amino-acid chain; its full sequence is DNA primase DnaG (424 aa).

Positions Asp-166–Glu-241 constitute a Toprim domain. 3 residues coordinate Mg(2+): Glu-172, Asp-215, and Asp-217.

This sequence belongs to the archaeal DnaG primase family. Forms a ternary complex with MCM helicase and DNA. Component of the archaeal exosome complex. The cofactor is Mg(2+).

It catalyses the reaction ssDNA + n NTP = ssDNA/pppN(pN)n-1 hybrid + (n-1) diphosphate.. Functionally, RNA polymerase that catalyzes the synthesis of short RNA molecules used as primers for DNA polymerase during DNA replication. Also part of the exosome, which is a complex involved in RNA degradation. Acts as a poly(A)-binding protein that enhances the interaction between heteromeric, adenine-rich transcripts and the exosome. The chain is DNA primase DnaG from Staphylothermus marinus (strain ATCC 43588 / DSM 3639 / JCM 9404 / F1).